Here is a 140-residue protein sequence, read N- to C-terminus: ATP synthase epsilon chain (140 aa).

This sequence belongs to the ATPase epsilon chain family. As to quaternary structure, F-type ATPases have 2 components, CF(1) - the catalytic core - and CF(0) - the membrane proton channel. CF(1) has five subunits: alpha(3), beta(3), gamma(1), delta(1), epsilon(1). CF(0) has three main subunits: a, b and c.

The protein resides in the cell inner membrane. In terms of biological role, produces ATP from ADP in the presence of a proton gradient across the membrane. The protein is ATP synthase epsilon chain of Neisseria meningitidis serogroup A / serotype 4A (strain DSM 15465 / Z2491).